A 338-amino-acid chain; its full sequence is 1-aminocyclopropane-1-carboxylate deaminase (338 aa).

The residue at position 51 (K51) is an N6-(pyridoxal phosphate)lysine. The active-site Nucleophile is S78.

This sequence belongs to the ACC deaminase/D-cysteine desulfhydrase family. In terms of assembly, homotrimer. It depends on pyridoxal 5'-phosphate as a cofactor.

The enzyme catalyses 1-aminocyclopropane-1-carboxylate + H2O = 2-oxobutanoate + NH4(+). Its function is as follows. Catalyzes a cyclopropane ring-opening reaction, the irreversible conversion of 1-aminocyclopropane-1-carboxylate (ACC) to ammonia and alpha-ketobutyrate. Allows growth on ACC as a nitrogen source. The protein is 1-aminocyclopropane-1-carboxylate deaminase of Pseudomonas fluorescens.